A 406-amino-acid polypeptide reads, in one-letter code: Imidazolonepropionase (406 aa).

2 residues coordinate Fe(3+): histidine 72 and histidine 74. Zn(2+)-binding residues include histidine 72 and histidine 74. The 4-imidazolone-5-propanoate site is built by arginine 81, tyrosine 144, and histidine 177. Tyrosine 144 contacts N-formimidoyl-L-glutamate. Residue histidine 242 coordinates Fe(3+). Histidine 242 is a Zn(2+) binding site. A 4-imidazolone-5-propanoate-binding site is contributed by glutamine 245. A Fe(3+)-binding site is contributed by aspartate 317. Aspartate 317 contributes to the Zn(2+) binding site. Residues asparagine 319 and glycine 321 each contribute to the N-formimidoyl-L-glutamate site. Threonine 322 is a 4-imidazolone-5-propanoate binding site.

The protein belongs to the metallo-dependent hydrolases superfamily. HutI family. Zn(2+) is required as a cofactor. Fe(3+) serves as cofactor.

The protein resides in the cytoplasm. It carries out the reaction 4-imidazolone-5-propanoate + H2O = N-formimidoyl-L-glutamate. It participates in amino-acid degradation; L-histidine degradation into L-glutamate; N-formimidoyl-L-glutamate from L-histidine: step 3/3. Catalyzes the hydrolytic cleavage of the carbon-nitrogen bond in imidazolone-5-propanoate to yield N-formimidoyl-L-glutamate. It is the third step in the universal histidine degradation pathway. The sequence is that of Imidazolonepropionase from Yersinia enterocolitica serotype O:8 / biotype 1B (strain NCTC 13174 / 8081).